Consider the following 337-residue polypeptide: Mortality factor related protein 1 (337 aa).

The Tudor-knot domain maps to 7–55 (FEVGENVACIYKGKPYDAKITDIKTNSDGKELYCVHFKGWNNRYDEKIP). A disordered region spans residues 75-113 (HNAELPTTALKPKKKSLAAEAPRDDRDDTPGTSKGKKAK). Residues 122–327 (TADDMKVELP…ASNDYYRRSL (206 aa)) form the MRG domain.

As to quaternary structure, component of the SIN3S complex, which contains at least sin-3, hda-1, athp-1 and mrg-1. Interacts with cfp-1, a component of the SET2 complex. Interacts with rfp-1. Expressed in oocytes (at protein level). Expressed mainly in germ cells, but also at lower levels in several somatic cell types, including intestinal cells.

The protein resides in the nucleus. It localises to the chromosome. Functionally, protein involved in the remodeling of chromatin thereby regulating various processes including transcription, chromosome synapsis and genome integrity. Mainly binds genomic loci carrying trimethylated histone H3 'Lys-36' (H3K36me3) or 'Lys-4' (H3K4me3), and acetylated histone H3 'Lys-9' (H3K9ac), 'Lys-27' (H3K27ac). During meiosis, required for the presynaptic pairing of homologous chromosomal regions outside of the pairing center and for the progression of chromosome synapsis. Essential maternal factor required in postembryonic germline development and in maintaining germ cell identity. Plays an important role in maintaining genomic integrity in primordial germ cells (PGCs) during meiosis by regulating DNA double-strand break (DSB) repair and synapsis. Also, required for chromatin-based transcriptional silencing in PGCs and for silencing of X-linked genes in the maternal germ line. By retaining histone acetyltransferase, cbp-1, in euchromatin, promotes the anchoring of heterochromatin at the inner nuclear membrane in intestinal and hypodermal cells. This chain is Mortality factor related protein 1, found in Caenorhabditis elegans.